The primary structure comprises 185 residues: MELDLALDAAGPWSPEDPSSLIETQTWQITLVDWIQTICADPSLPCPALVCQADEVSLGLRFTDDATITALNSTWRQRNQATDVLSFAALEEAPGLPDVSCVELGDIVISLDTARRQASEHGHNLTRELRWLVSHGLLHLLGWDHPDEESLVAMLQLQEQLLDGGSNVRIRDPHSVDTTVDVNAH.

Zn(2+) is bound by residues His135, His139, and His145.

Belongs to the endoribonuclease YbeY family. Zn(2+) is required as a cofactor.

The protein resides in the cytoplasm. Its function is as follows. Single strand-specific metallo-endoribonuclease involved in late-stage 70S ribosome quality control and in maturation of the 3' terminus of the 16S rRNA. In Parasynechococcus marenigrum (strain WH8102), this protein is Endoribonuclease YbeY.